The sequence spans 377 residues: Serine protease inhibitor (377 aa).

The first 27 residues, 1-27 (MAALQAAVSSQLAISFFSSLIVPGAEK), serve as a signal peptide directing secretion. N-linked (GlcNAc...) asparagine glycosylation occurs at asparagine 301. An RCL region spans residues 328 to 349 (GTEAAAATGFGVNFMSMPMQVR). Asparagine 361 is a glycosylation site (N-linked (GlcNAc...) asparagine).

The protein belongs to the serpin family.

Inhibitor of serine proteases. Inhibits chymotrypsin, cathepsin G and human neutrophil elastase. This is Serine protease inhibitor from Cyanea capillata (Lion's mane jellyfish).